A 472-amino-acid chain; its full sequence is Eukaryotic translation initiation factor 2 subunit 3 (472 aa).

An N-acetylalanine modification is found at Ala-2. Ser-16 carries the phosphoserine modification. Residues Gln-39–Arg-248 enclose the tr-type G domain. Residues Gly-48–Ser-55 are G1. Ala-51–Thr-56 lines the GTP pocket. The interval Asn-76–Lys-80 is G2. The segment at Asp-134–Gly-137 is G3. GTP-binding positions include Asn-190–Asp-193 and Ser-225–Gln-227. The tract at residues Asn-190–Asp-193 is G4. Positions Ser-225–Gln-227 are G5. The tract at residues Gly-457–Val-469 is interacts with CDC123.

Belongs to the TRAFAC class translation factor GTPase superfamily. Classic translation factor GTPase family. EIF2G subfamily. In terms of assembly, eukaryotic translation initiation factor 2 eIF2 is a heterotrimeric complex composed of an alpha (EIF2S1), a beta (EIF2S2) and a gamma (EIF2S3) chain. eIF2 is member of the 43S pre-initiation complex (43S PIC). Interacts (via C-terminus) with CDC123; the interaction is direct.

It localises to the cytoplasm. It is found in the cytosol. The catalysed reaction is GTP + H2O = GDP + phosphate + H(+). Its function is as follows. Member of the eIF2 complex that functions in the early steps of protein synthesis by forming a ternary complex with GTP and initiator tRNA. This complex binds to a 40S ribosomal subunit, followed by mRNA binding to form the 43S pre-initiation complex (43S PIC). Junction of the 60S ribosomal subunit to form the 80S initiation complex is preceded by hydrolysis of the GTP bound to eIF2 and release of an eIF2-GDP binary complex. In order for eIF2 to recycle and catalyze another round of initiation, the GDP bound to eIF2 must exchange with GTP by way of a reaction catalyzed by eIF-2B. The sequence is that of Eukaryotic translation initiation factor 2 subunit 3 (EIF2S3) from Bos taurus (Bovine).